The primary structure comprises 497 residues: Tripartite motif-containing protein 5 (497 aa).

Ala2 is modified (N-acetylalanine). An RING-type zinc finger spans residues 15–60 (CPICLELLTEPLSLPCGHSFCQACITANHRKSMLYKEGERSCPVCR). A Phosphoserine modification is found at Ser87. The segment at 92-133 (LKVDHCARHGEKLLLFCQEDSKVICWLCERSQEHRGHHTFLM) adopts a B box-type zinc-finger fold. The Zn(2+) site is built by Cys97, His100, Cys119, and His125. Residues 137–225 (AQEYHVKLQT…LTKSETEMVQ (89 aa)) adopt a coiled-coil conformation. The required for interaction with GABARAP and for autophagy stretch occupies residues 187-200 (FEQLREILDWEESN). A B30.2/SPRY domain is found at 283 to 497 (LKGMLDMFRE…VPMTLCSPSS (215 aa)).

This sequence belongs to the TRIM/RBCC family. As to quaternary structure, can form homodimers and homotrimers. In addition to lower-order dimerization, also exhibits a higher-order multimerization and both low- and high-order multimerizations are essential for its restriction activity. Interacts with BTBD1 and BTBD2. Interacts with PSMC4, PSMC5, PSMD7 and HSPA8/HSC70. Interacts (via B30.2/SPRY domain) with HSPA1A/B. Interacts with PSMC2, MAP3K7/TAK1, TAB2 and TAB3. Interacts with SQSTM1. Interacts with TRIM6 and TRIM34. Interacts with ULK1 (phosphorylated form), GABARAP, GABARAPL1, GABARAPL2, MAP1LC3A, MAP1LC3C and BECN1. Post-translationally, degraded in a proteasome-independent fashion in the absence of viral infection but in a proteasome-dependent fashion following exposure to restriction sensitive virus. In terms of processing, autoubiquitinated in a RING finger- and UBE2D2-dependent manner. Monoubiquitinated by TRIM21. Deubiquitinated by Yersinia YopJ. Ubiquitination may not lead to proteasomal degradation.

The protein resides in the cytoplasm. Its subcellular location is the nucleus. The enzyme catalyses S-ubiquitinyl-[E2 ubiquitin-conjugating enzyme]-L-cysteine + [acceptor protein]-L-lysine = [E2 ubiquitin-conjugating enzyme]-L-cysteine + N(6)-ubiquitinyl-[acceptor protein]-L-lysine.. The protein operates within protein modification; protein ubiquitination. Capsid-specific restriction factor that prevents infection from non-host-adapted retroviruses. Blocks viral replication early in the life cycle, after viral entry but before reverse transcription. In addition to acting as a capsid-specific restriction factor, also acts as a pattern recognition receptor that activates innate immune signaling in response to the retroviral capsid lattice. Binding to the viral capsid triggers its E3 ubiquitin ligase activity, and in concert with the heterodimeric ubiquitin conjugating enzyme complex UBE2V1-UBE2N (also known as UBC13-UEV1A complex) generates 'Lys-63'-linked polyubiquitin chains, which in turn are catalysts in the autophosphorylation of the MAP3K7/TAK1 complex (includes TAK1, TAB2, and TAB3). Activation of the MAP3K7/TAK1 complex by autophosphorylation results in the induction and expression of NF-kappa-B and MAPK-responsive inflammatory genes, thereby leading to an innate immune response in the infected cell. Plays a role in regulating autophagy through activation of autophagy regulator BECN1 by causing its dissociation from its inhibitors BCL2 and TAB2. The sequence is that of Tripartite motif-containing protein 5 (TRIM5) from Papio anubis (Olive baboon).